The sequence spans 323 residues: MDRQGAVGQLRRTVEEFAGTYCDIDDQWCVALSGGSDSLALTAVAAQLRSTTAFIVDHGLQSDSAAVAETARKQAISLGCVDAQVLCVQIDPPFGPKGGLEAAARAARYAVLGANRNGPVLLAHTLDDQAETVLLGLGRGSGARSIAGMRPHDPPWCRPLLGVRRSVPRAACHELGLNAWQDPHNTDCRYTRTRLRLEVLPLLEDVLGGGVVEALARTATALREDTELIDTFAAQALPNICAGSGLHARALAALPDAVRRRVIRGWLLNGGATGLTDKQIRGVDTLVTAWRGQGGVAVGSTLRGQRLIASRYDGVLTLHCAPV.

33–38 lines the ATP pocket; sequence SGGSDS.

This sequence belongs to the tRNA(Ile)-lysidine synthase family.

The protein localises to the cytoplasm. The catalysed reaction is cytidine(34) in tRNA(Ile2) + L-lysine + ATP = lysidine(34) in tRNA(Ile2) + AMP + diphosphate + H(+). Ligates lysine onto the cytidine present at position 34 of the AUA codon-specific tRNA(Ile) that contains the anticodon CAU, in an ATP-dependent manner. Cytidine is converted to lysidine, thus changing the amino acid specificity of the tRNA from methionine to isoleucine. The sequence is that of tRNA(Ile)-lysidine synthase from Mycobacterium leprae (strain TN).